A 327-amino-acid chain; its full sequence is 2-keto-3-deoxygluconate permease (327 aa).

Transmembrane regions (helical) follow at residues 10-30 (IPGG…TFSP), 42-62 (GMIT…GASI), 73-93 (KSGT…AIAS), 95-115 (IIPE…LALV), 139-159 (AGAF…IILG), 163-183 (IASF…VGFA), 199-219 (VQTL…LTVI), 224-244 (LLGI…LIIA), 254-274 (TAGI…VLIA), and 289-309 (SLVA…TSIW).

The protein belongs to the KdgT transporter family.

Its subcellular location is the cell inner membrane. The catalysed reaction is 2-dehydro-3-deoxy-D-gluconate(in) + H(+)(in) = 2-dehydro-3-deoxy-D-gluconate(out) + H(+)(out). Its function is as follows. Catalyzes the proton-dependent uptake of 2-keto-3-deoxygluconate (KDG) into the cell. The polypeptide is 2-keto-3-deoxygluconate permease (Escherichia coli O127:H6 (strain E2348/69 / EPEC)).